The following is a 165-amino-acid chain: Large ribosomal subunit protein uL5 (165 aa).

This sequence belongs to the universal ribosomal protein uL5 family. In terms of assembly, part of the 50S ribosomal subunit; contacts the 5S rRNA and probably tRNA. Forms a bridge to the 30S subunit in the 70S ribosome.

Functionally, this is one of the proteins that bind and probably mediate the attachment of the 5S RNA into the large ribosomal subunit, where it forms part of the central protuberance. In the 70S ribosome it contacts protein S13 of the 30S subunit (bridge B1b), connecting the 2 subunits; this bridge is implicated in subunit movement. May contact the P site tRNA; the 5S rRNA and some of its associated proteins might help stabilize positioning of ribosome-bound tRNAs. The sequence is that of Large ribosomal subunit protein uL5 from Methanoregula boonei (strain DSM 21154 / JCM 14090 / 6A8).